The sequence spans 190 residues: Subtilisin inhibitor CLSI-II (190 aa).

2 cysteine pairs are disulfide-bonded: Cys44/Cys88 and Cys142/Cys149.

This sequence belongs to the protease inhibitor I3 (leguminous Kunitz-type inhibitor) family. Forms active dimers on storage in aqueous solution, possibly through formation of an intermolecular disulfide bond. The N-terminal Asn is removed in about 50% of both the CLSI-II and CLSI-III chains.

Its subcellular location is the secreted. In terms of biological role, inhibits subtilisin-type microbial serine proteases incuding proteinase K, subtilisin BPN', subtilisin Carlsberg and subtilisin E in a non-stoichiometric manner. Weakly inhibits A.oryzae protease and some metalloproteases including pronase E. Does not inhibit trypsin, chymotrypsin, S.griseus alkaline protease or A.lyticus lysyl endopeptidase. CLSI-II has a wider inhibitory specificity than CLSI-III. This Canavalia lineata (Beach bean) protein is Subtilisin inhibitor CLSI-II.